A 3142-amino-acid chain; its full sequence is Huntingtin (3142 aa).

The tract at residues 3–13 is sufficient for interaction with TPR; the sequence is TLEKLMKAFES. Lys-9 is subject to N6-acetyllysine. Residues 14-85 are disordered; that stretch reads LKSFQQQQQQ…PGPAVAEEPL (72 aa). Low complexity predominate over residues 18–37; the sequence is QQQQQQQQQQQQQQQQQQQQ. A compositionally biased stretch (pro residues) spans 38-78; sequence QPPPPPPPPPPPQLPQPPPQAQPLLPQPQPPPPPPPPPPGP. Residues Lys-176 and Lys-234 each carry the N6-acetyllysine modification. 3 HEAT repeats span residues 204-241, 246-283, and 316-360; these read PYLV…SFGN, NEIK…HSRR, and LTLR…VYEL. Lys-343 bears the N6-acetyllysine mark. Residues Ser-411, Ser-417, Ser-419, and Ser-432 each carry the phosphoserine modification. N6-acetyllysine is present on Lys-442. Residues 447–469 are disordered; sequence EEEALEDDSESRSDVSSSALTAS. The interaction with ZDHHC17 stretch occupies residues 491-502; it reads GHDIITEQPRSQ. A disordered region spans residues 517–583; it reads LTSSATDGDE…TPSDSSEIVL (67 aa). Residues 531 to 545 are compositionally biased toward low complexity; that stretch reads SHSSSQVSAVPSDPA. A compositionally biased stretch (polar residues) spans 550-579; it reads DGTQASSPISDSSQTTTEGPDSAVTPSDSS. A lipid anchor (N-myristoyl glycine) is attached at Gly-551. 2 positions are modified to phosphoserine: Ser-640 and Ser-643. HEAT repeat units lie at residues 802-839 and 902-940; these read FSLA…SLCS and KLQE…KLFY. The disordered stretch occupies residues 1176–1225; sequence PSLSPIRRKGKEKEPGEQASVPLSPKKGSEASAASRQSDTSGPVTTSKSS. 2 positions are modified to phosphoserine; by CDK5: Ser-1179 and Ser-1199. Residues 1207-1225 show a composition bias toward polar residues; the sequence is SAASRQSDTSGPVTTSKSS. A phosphoserine mark is found at Ser-1870 and Ser-1874. The interval 2330–2351 is disordered; sequence ERRTNTPKAISEEEEEVDPNTQ. Residues 2395 to 2404 carry the Nuclear export signal motif; it reads IIISLARLPL. A disordered region spans residues 2633 to 2662; it reads EEEWDEEEEEEADAPAPSSPPTSPVNSRKH. Residues 2634-2645 are compositionally biased toward acidic residues; it reads EEWDEEEEEEAD.

Belongs to the huntingtin family. Interacts with PFN1. Interacts through its N-terminus with PRPF40A. Interacts with PQBP1. Interacts with SETD2. Interacts with SH3GLB1. Interacts with SYVN. Interacts with TPR; the interaction is inhibited by forms of Huntingtin with expanded polyglutamine stretch. Interacts with ZDHHC13 (via ANK repeats). Interacts with ZDHHC17 (via ANK repeats). Interacts with F8A1/F8A2/F8A3. Found in a complex with F8A1/F8A2/F8A3, HTT and RAB5A; mediates the recruitment of HTT by RAB5A. Cleaved by caspases downstream of the polyglutamine stretch. The resulting N-terminal fragments are cytotoxic and provokes apoptosis. In terms of processing, forms with expanded polyglutamine expansion are specifically ubiquitinated by SYVN1, which promotes their proteasomal degradation. Post-translationally, phosphorylation at Ser-1179 and Ser-1199 by CDK5 in response to DNA damage in nuclei of neurons protects neurons against polyglutamine expansion as well as DNA damage mediated toxicity. Myristoylated at Gly-551, following proteolytic cleavage at Asp-550. Expressed in the brain cortex (at protein level). Widely expressed with the highest level of expression in the brain (nerve fibers, varicosities, and nerve endings). In the brain, the regions where it can be mainly found are the cerebellar cortex, the neocortex, the striatum, and the hippocampal formation.

It localises to the cytoplasm. The protein resides in the nucleus. It is found in the early endosome. Its subcellular location is the cytoplasmic vesicle. The protein localises to the autophagosome. In terms of biological role, may play a role in microtubule-mediated transport or vesicle function. Functionally, promotes the formation of autophagic vesicles. The polypeptide is Huntingtin (HTT) (Homo sapiens (Human)).